The primary structure comprises 93 residues: MFFFGIFRCNMDHWTTKRQVYIYLCFSLMTIALICYLIHICCHTKKNVVTNALPSNNMALIPYTPSNNMALIPYTPSNNTVPPPYTISGSCPQ.

A helical membrane pass occupies residues Val-20–Ile-40. N-linked (GlcNAc...) asparagine; by host glycosylation occurs at Asn-78.

Belongs to the asfivirus KP93L family.

It localises to the host membrane. This is an uncharacterized protein from Ornithodoros (relapsing fever ticks).